The chain runs to 252 residues: Trans-aconitate 2-methyltransferase (252 aa).

It belongs to the methyltransferase superfamily. Tam family.

It localises to the cytoplasm. The catalysed reaction is trans-aconitate + S-adenosyl-L-methionine = (E)-3-(methoxycarbonyl)pent-2-enedioate + S-adenosyl-L-homocysteine. Its function is as follows. Catalyzes the S-adenosylmethionine monomethyl esterification of trans-aconitate. The protein is Trans-aconitate 2-methyltransferase of Escherichia coli O7:K1 (strain IAI39 / ExPEC).